We begin with the raw amino-acid sequence, 799 residues long: Potassium transporter 21 (799 aa).

Topologically, residues 1–56 (MDPGVEKKKQQMELVDVESGGLPVERQDSLFREAVRAEHAGAAHWDEQDSWGRTMS) are cytoplasmic. A helical transmembrane segment spans residues 57-77 (LAFQCVGILYGDIGTSSLYVY). Residues 78–93 (SSTFEHGIGHPDDVVG) are Extracellular-facing. A helical transmembrane segment spans residues 94–114 (VLSLIVYSFMLFTVIKIVFVA). The Cytoplasmic segment spans residues 115-181 (LHANDHGDGG…QLLEASKAAK (67 aa)). The helical transmembrane segment at 182–202 (ISLFLLTILAIAMVISDAVLT) threads the bilayer. Residues 203–219 (PPISVLSAVGGLREKVP) lie on the Extracellular side of the membrane. The chain crosses the membrane as a helical span at residues 220 to 240 (HLTTDQIVWITVAILVVLFAI). The Cytoplasmic portion of the chain corresponds to 241 to 251 (QRYGTDKVGYS). A helical transmembrane segment spans residues 252 to 272 (FAPIILLWLLLIGATGLYNLI). The Extracellular portion of the chain corresponds to 273 to 301 (KHDISVLRAFNPKYIIDYFRRNKKEGWVS). Residues 302–322 (LGSILLCFTGSEALFANLGYF) form a helical membrane-spanning segment. Topologically, residues 323–328 (SIRSIQ) are cytoplasmic. The chain crosses the membrane as a helical span at residues 329–349 (LSFSFALLPSVLLTYIGQAAF). Residues 350-362 (LSKNPKNVANTFF) are Extracellular-facing. A helical transmembrane segment spans residues 363-383 (AATPISLFWPTFIMAIAASII). The Cytoplasmic portion of the chain corresponds to 384–420 (GSQAMISCAFATVSHLQSLSCFPRVKILHTSKRFPGQ). The helical transmembrane segment at 421-441 (LYIPGVNFLLCVAACVVTVSF) threads the bilayer. The Extracellular portion of the chain corresponds to 442-452 (KTTVIIGKAHE). Residues 453–473 (ICVILVMIITTLLMTIVMLLV) form a helical membrane-spanning segment. Residues 474-475 (WK) are Cytoplasmic-facing. Residues 476-496 (INILWVALFFITFTSTEAVYL) form a helical membrane-spanning segment. Residues 497-508 (SSVLYKFTHGPY) are Extracellular-facing. The helical transmembrane segment at 509–529 (VPVAMSVVLMVVMIVWHYVHV) threads the bilayer. At 530–799 (KRYKYELEHT…LLKVGISYEI (270 aa)) the chain is on the cytoplasmic side.

Belongs to the HAK/KUP transporter (TC 2.A.72.3) family.

It is found in the membrane. High-affinity potassium transporter. The sequence is that of Potassium transporter 21 (HAK21) from Oryza sativa subsp. japonica (Rice).